We begin with the raw amino-acid sequence, 241 residues long: Chromosome partition protein MukE (241 aa).

The tract at residues 207-241 (DGEAATPDSLSQEKSAVKNDEEIEDELDEGLGEEE) is disordered. The segment covering 227-241 (EEIEDELDEGLGEEE) has biased composition (acidic residues).

Belongs to the MukE family. In terms of assembly, interacts, and probably forms a ternary complex, with MukF and MukB. The complex formation is stimulated by calcium or magnesium.

The protein localises to the cytoplasm. The protein resides in the nucleoid. Functionally, involved in chromosome condensation, segregation and cell cycle progression. May participate in facilitating chromosome segregation by condensation DNA from both sides of a centrally located replisome during cell division. Probably acts via its interaction with MukB and MukF. This Mannheimia succiniciproducens (strain KCTC 0769BP / MBEL55E) protein is Chromosome partition protein MukE.